We begin with the raw amino-acid sequence, 284 residues long: Pantothenate synthetase (284 aa).

30 to 37 (MGFLHEGH) is an ATP binding site. Histidine 37 (proton donor) is an active-site residue. Glutamine 61 is a binding site for (R)-pantoate. Glutamine 61 contacts beta-alanine. 147–150 (GRKD) provides a ligand contact to ATP. Glutamine 153 is a binding site for (R)-pantoate. ATP-binding positions include valine 176 and 184–187 (MSSR).

Belongs to the pantothenate synthetase family. As to quaternary structure, homodimer.

It localises to the cytoplasm. It carries out the reaction (R)-pantoate + beta-alanine + ATP = (R)-pantothenate + AMP + diphosphate + H(+). Its pathway is cofactor biosynthesis; (R)-pantothenate biosynthesis; (R)-pantothenate from (R)-pantoate and beta-alanine: step 1/1. Catalyzes the condensation of pantoate with beta-alanine in an ATP-dependent reaction via a pantoyl-adenylate intermediate. The chain is Pantothenate synthetase from Pelobacter propionicus (strain DSM 2379 / NBRC 103807 / OttBd1).